We begin with the raw amino-acid sequence, 1301 residues long: DNA-directed RNA polymerase subunit beta (1301 aa).

This sequence belongs to the RNA polymerase beta chain family. As to quaternary structure, in plastids the minimal PEP RNA polymerase catalytic core is composed of four subunits: alpha, beta, beta', and beta''. When a (nuclear-encoded) sigma factor is associated with the core the holoenzyme is formed, which can initiate transcription.

Its subcellular location is the plastid. It is found in the chloroplast. The enzyme catalyses RNA(n) + a ribonucleoside 5'-triphosphate = RNA(n+1) + diphosphate. In terms of biological role, DNA-dependent RNA polymerase catalyzes the transcription of DNA into RNA using the four ribonucleoside triphosphates as substrates. This chain is DNA-directed RNA polymerase subunit beta, found in Chlorella vulgaris (Green alga).